The primary structure comprises 149 residues: Ribosome-binding factor A (149 aa).

The disordered stretch occupies residues 125–149; the sequence is FGSADEVLNEDEGATDDTDDTKGKD. Acidic residues predominate over residues 131-143; it reads VLNEDEGATDDTD.

This sequence belongs to the RbfA family. As to quaternary structure, monomer. Binds 30S ribosomal subunits, but not 50S ribosomal subunits or 70S ribosomes.

It localises to the cytoplasm. Its function is as follows. One of several proteins that assist in the late maturation steps of the functional core of the 30S ribosomal subunit. Associates with free 30S ribosomal subunits (but not with 30S subunits that are part of 70S ribosomes or polysomes). Required for efficient processing of 16S rRNA. May interact with the 5'-terminal helix region of 16S rRNA. The sequence is that of Ribosome-binding factor A from Shewanella sp. (strain W3-18-1).